Consider the following 630-residue polypeptide: Probable potassium transport system protein Kup (630 aa).

A run of 12 helical transmembrane segments spans residues 19–39 (GLIGVLGVVYGDIGTSPLYAV), 59–79 (LLSLIFWALIITVTIKYVLLI), 108–128 (WIIGIIGICGAGLFFGDATIT), 145–165 (PGLKEFVLPIAIAVILVLFFV), 173–193 (VGGAFGPIMVIWFVVIGALGL), 220–240 (LLAFIALGSVVLAVTGAEALY), 255–275 (WLFFVLPCLLLNYFGQGALVI), 284–304 (PFFFLLPHALVVPMVILATIA), 345–365 (IYVPPVNSFLFVVVVLLVLGF), 374–394 (AYGIAVTGTFLSTNALAAFVY), 405–425 (TVLVFGAIGLVDFAFFSSNVL), and 427–447 (VFDGGWVPLAIGFSLITVMTT).

It belongs to the HAK/KUP transporter (TC 2.A.72) family.

Its subcellular location is the cell inner membrane. It catalyses the reaction K(+)(in) + H(+)(in) = K(+)(out) + H(+)(out). Transport of potassium into the cell. Likely operates as a K(+):H(+) symporter. The polypeptide is Probable potassium transport system protein Kup (Acidiphilium cryptum (strain JF-5)).